The primary structure comprises 244 residues: Gamma-gliadin (244 aa).

The disordered stretch occupies residues 18 to 64 (QQPFLQQPQQPSPQPQQVVQIISPATPTTIPSAGKPTSAPFPQQQQQ). Residues 35-48 (VVQIISPATPTTIP) are compositionally biased toward polar residues.

The protein belongs to the gliadin/glutenin family.

Functionally, gliadin is the major seed storage protein in wheat. In Triticum aestivum (Wheat), this protein is Gamma-gliadin.